A 135-amino-acid polypeptide reads, in one-letter code: Prostate and breast cancer overexpressed gene 1 protein (135 aa).

As to expression, expressed in colon, prostate, small intestine, testis and spleen, with lower expression in thymus, ovary, and peripheral blood leukocytes. Up-regulated expression in prostate, breast, and bladder cancer, but not in lung and colon cancer.

Its subcellular location is the cytoplasm. It is found in the nucleus. This chain is Prostate and breast cancer overexpressed gene 1 protein (PBOV1), found in Homo sapiens (Human).